The chain runs to 224 residues: ATP-dependent dethiobiotin synthetase BioD (224 aa).

13–18 (NVGKTI) lines the ATP pocket. Mg(2+) is bound at residue T17. The active site involves K38. S42 lines the substrate pocket. Residues D55, 116-119 (EGAG), 176-177 (NN), and N211 each bind ATP. 2 residues coordinate Mg(2+): D55 and E116.

It belongs to the dethiobiotin synthetase family. As to quaternary structure, homodimer. Requires Mg(2+) as cofactor.

It localises to the cytoplasm. The enzyme catalyses (7R,8S)-7,8-diammoniononanoate + CO2 + ATP = (4R,5S)-dethiobiotin + ADP + phosphate + 3 H(+). It functions in the pathway cofactor biosynthesis; biotin biosynthesis; biotin from 7,8-diaminononanoate: step 1/2. Functionally, catalyzes a mechanistically unusual reaction, the ATP-dependent insertion of CO2 between the N7 and N8 nitrogen atoms of 7,8-diaminopelargonic acid (DAPA, also called 7,8-diammoniononanoate) to form a ureido ring. The sequence is that of ATP-dependent dethiobiotin synthetase BioD from Buchnera aphidicola subsp. Acyrthosiphon pisum (strain APS) (Acyrthosiphon pisum symbiotic bacterium).